The primary structure comprises 670 residues: C6 finger domain transcription factor iacK (670 aa).

A disordered region spans residues 1 to 84 (MNTSPDYAQP…GEPKQSGPTV (84 aa)). The span at 44 to 54 (GPPPPPPPPPT) shows a compositional bias: pro residues. Residues 55 to 74 (ATATAATAAATTTTAAPSAT) are compositionally biased toward low complexity. Residues 88-114 (CLACRSKHLKCDGGNPCARCQASESIC) constitute a DNA-binding region (zn(2)-C6 fungal-type). Residues 122 to 157 (GYKGPRRNGTQNPNKRHAAASDDGSPNSNGSNESCP) form a disordered region. Residues 142–155 (SDDGSPNSNGSNES) are compositionally biased toward low complexity.

It localises to the nucleus. Transcription factor; part of the gene cluster that mediates the biosynthesis of iso-A82775C, a enylepoxycyclohexane and biosynthetic precursor of the chloropestolide anticancer natural products. This Pestalotiopsis fici (strain W106-1 / CGMCC3.15140) protein is C6 finger domain transcription factor iacK.